The primary structure comprises 426 residues: Lipase 7 (426 aa).

An N-terminal signal peptide occupies residues 1 to 15 (MFVFLALITLTTCLQ). N-linked (GlcNAc...) asparagine glycans are attached at residues asparagine 74, asparagine 175, and asparagine 179. 2 disulfide bridges follow: cysteine 108/cysteine 269 and cysteine 341/cysteine 385. The active-site Charge relay system is the serine 190. Residue asparagine 223 is glycosylated (N-linked (GlcNAc...) asparagine). The Charge relay system role is filled by histidine 358. N-linked (GlcNAc...) asparagine glycosylation is found at asparagine 378, asparagine 379, asparagine 422, and asparagine 423.

The protein belongs to the AB hydrolase superfamily. Lipase family. Class Lip subfamily.

It catalyses the reaction a triacylglycerol + H2O = a diacylglycerol + a fatty acid + H(+). In terms of biological role, secreted lipase that is able to hydrolze both the neutral triacylglycerols and the monopalmitate ester Tween 40, allowing the use of hydrolyzed products as carbon sources. Has broad lipolytic activity, which may be important for colonization and subsequent infection, therefore contributing to the persistence and virulence in human tissue. In Candida albicans (strain SC5314 / ATCC MYA-2876) (Yeast), this protein is Lipase 7.